We begin with the raw amino-acid sequence, 77 residues long: Small ribosomal subunit protein uS17 (77 aa).

Belongs to the universal ribosomal protein uS17 family. As to quaternary structure, part of the 30S ribosomal subunit.

One of the primary rRNA binding proteins, it binds specifically to the 5'-end of 16S ribosomal RNA. The sequence is that of Small ribosomal subunit protein uS17 from Rickettsia conorii (strain ATCC VR-613 / Malish 7).